Consider the following 125-residue polypeptide: Fumarate reductase subunit D (125 aa).

Helical transmembrane passes span 30–50 (FAMI…LGVI), 63–83 (FATS…PMWH), and 105–125 (IACY…IFMI).

Belongs to the FrdD family. As to quaternary structure, part of an enzyme complex containing four subunits: a flavoprotein (FrdA), an iron-sulfur protein (FrdB), and two hydrophobic anchor proteins (FrdC and FrdD).

Its subcellular location is the cell inner membrane. Anchors the catalytic components of the fumarate reductase complex to the cell membrane, binds quinones. In Vibrio campbellii (strain ATCC BAA-1116), this protein is Fumarate reductase subunit D.